We begin with the raw amino-acid sequence, 214 residues long: Large ribosomal subunit protein uL3 (214 aa).

Belongs to the universal ribosomal protein uL3 family. As to quaternary structure, part of the 50S ribosomal subunit. Forms a cluster with proteins L14 and L19.

In terms of biological role, one of the primary rRNA binding proteins, it binds directly near the 3'-end of the 23S rRNA, where it nucleates assembly of the 50S subunit. This is Large ribosomal subunit protein uL3 from Streptomyces coelicolor (strain ATCC BAA-471 / A3(2) / M145).